The sequence spans 223 residues: Phosphoribosylformylglycinamidine synthase subunit PurQ (223 aa).

In terms of domain architecture, Glutamine amidotransferase type-1 spans 3 to 223 (SAVVQLPGLN…FASALDVVAA (221 aa)). The active-site Nucleophile is C86. Residues H196 and E198 contribute to the active site.

Part of the FGAM synthase complex composed of 1 PurL, 1 PurQ and 2 PurS subunits.

The protein resides in the cytoplasm. The enzyme catalyses N(2)-formyl-N(1)-(5-phospho-beta-D-ribosyl)glycinamide + L-glutamine + ATP + H2O = 2-formamido-N(1)-(5-O-phospho-beta-D-ribosyl)acetamidine + L-glutamate + ADP + phosphate + H(+). The catalysed reaction is L-glutamine + H2O = L-glutamate + NH4(+). Its pathway is purine metabolism; IMP biosynthesis via de novo pathway; 5-amino-1-(5-phospho-D-ribosyl)imidazole from N(2)-formyl-N(1)-(5-phospho-D-ribosyl)glycinamide: step 1/2. Its function is as follows. Part of the phosphoribosylformylglycinamidine synthase complex involved in the purines biosynthetic pathway. Catalyzes the ATP-dependent conversion of formylglycinamide ribonucleotide (FGAR) and glutamine to yield formylglycinamidine ribonucleotide (FGAM) and glutamate. The FGAM synthase complex is composed of three subunits. PurQ produces an ammonia molecule by converting glutamine to glutamate. PurL transfers the ammonia molecule to FGAR to form FGAM in an ATP-dependent manner. PurS interacts with PurQ and PurL and is thought to assist in the transfer of the ammonia molecule from PurQ to PurL. This Rhizobium etli (strain ATCC 51251 / DSM 11541 / JCM 21823 / NBRC 15573 / CFN 42) protein is Phosphoribosylformylglycinamidine synthase subunit PurQ.